Reading from the N-terminus, the 480-residue chain is UDP-N-acetylmuramoylalanine--D-glutamate ligase (480 aa).

110-116 (GTNGKST) lines the ATP pocket.

This sequence belongs to the MurCDEF family.

It localises to the cytoplasm. The catalysed reaction is UDP-N-acetyl-alpha-D-muramoyl-L-alanine + D-glutamate + ATP = UDP-N-acetyl-alpha-D-muramoyl-L-alanyl-D-glutamate + ADP + phosphate + H(+). It participates in cell wall biogenesis; peptidoglycan biosynthesis. Functionally, cell wall formation. Catalyzes the addition of glutamate to the nucleotide precursor UDP-N-acetylmuramoyl-L-alanine (UMA). The protein is UDP-N-acetylmuramoylalanine--D-glutamate ligase of Synechococcus sp. (strain JA-2-3B'a(2-13)) (Cyanobacteria bacterium Yellowstone B-Prime).